The primary structure comprises 328 residues: 4-hydroxythreonine-4-phosphate dehydrogenase (328 aa).

Substrate is bound by residues histidine 135 and threonine 136. 3 residues coordinate a divalent metal cation: histidine 165, histidine 210, and histidine 265. Substrate-binding residues include lysine 273, asparagine 282, and arginine 291.

This sequence belongs to the PdxA family. In terms of assembly, homodimer. It depends on Zn(2+) as a cofactor. The cofactor is Mg(2+). Requires Co(2+) as cofactor.

It localises to the cytoplasm. It catalyses the reaction 4-(phosphooxy)-L-threonine + NAD(+) = 3-amino-2-oxopropyl phosphate + CO2 + NADH. Its pathway is cofactor biosynthesis; pyridoxine 5'-phosphate biosynthesis; pyridoxine 5'-phosphate from D-erythrose 4-phosphate: step 4/5. Its function is as follows. Catalyzes the NAD(P)-dependent oxidation of 4-(phosphooxy)-L-threonine (HTP) into 2-amino-3-oxo-4-(phosphooxy)butyric acid which spontaneously decarboxylates to form 3-amino-2-oxopropyl phosphate (AHAP). This Pseudomonas aeruginosa (strain ATCC 15692 / DSM 22644 / CIP 104116 / JCM 14847 / LMG 12228 / 1C / PRS 101 / PAO1) protein is 4-hydroxythreonine-4-phosphate dehydrogenase.